A 1527-amino-acid chain; its full sequence is Rho guanine nucleotide exchange factor 11 (1527 aa).

The tract at residues 1-56 (MSIRLPHSIDRSASKKQSHLSSPIASWLSSLSSLGDSTPERTSPSHHRQPSDTSET) is disordered. Ser-2, Ser-30, Ser-32, and Ser-51 each carry phosphoserine. The span at 19 to 37 (HLSSPIASWLSSLSSLGDS) shows a compositional bias: low complexity. Residues 64-143 (CVIIQKDQHG…LTLLGSSPPS (80 aa)) enclose the PDZ domain. Residues 216–247 (PCGETSQRTCEGRLSVDSQEADSGLDSGTERF) are disordered. A phosphoserine mark is found at Ser-262 and Ser-268. Phosphothreonine is present on Thr-271. Ser-272 and Ser-288 each carry phosphoserine. The 181-residue stretch at 323–503 (ESDIIFQDLE…NTFMSHAGIR (181 aa)) folds into the RGSL domain. A coiled-coil region spans residues 461-487 (LRERQMAEKQLAALGDILSKYEEDRSA). Disordered stretches follow at residues 506-569 (ESRS…QSIK) and 582-687 (NSHQ…GRRS). Positions 509–519 (SSCTAEKTQSA) are enriched in polar residues. Composition is skewed to basic and acidic residues over residues 539 to 551 (SKKE…DKKR) and 624 to 645 (KGRE…RSDV). Phosphoserine is present on residues Ser-643 and Ser-671. Positions 656-672 (LHQSASSSASSLSTRSL) are enriched in low complexity. Phosphothreonine is present on residues Thr-676 and Thr-680. One can recognise a DH domain in the interval 742–931 (DRQEVINELF…REILKFVNEA (190 aa)). A PH domain is found at 973-1087 (KMIHEGPLTW…WMELLEEAVQ (115 aa)). Disordered regions lie at residues 1090–1184 (TKHP…NRGI), 1231–1321 (QAAG…TEPA), and 1379–1411 (AGPL…PQPY). Residues 1126 to 1138 (EVYHTEKEPKKLP) show a composition bias toward basic and acidic residues. The segment covering 1242–1251 (PTPSVVSITS) has biased composition (polar residues). A phosphoserine mark is found at Ser-1299 and Ser-1304. Residues 1312–1321 (AAEAASTEPA) are compositionally biased toward low complexity. Phosphoserine occurs at positions 1462 and 1463. Thr-1467 and Thr-1480 each carry phosphothreonine. The segment at 1480 to 1527 (TDYSLSPPAKEALASDSQNGQEQGSCPEEGSDIALEDSATDTAVSPGP) is disordered. Phosphoserine is present on Ser-1485. Over residues 1494–1503 (SDSQNGQEQG) the composition is skewed to polar residues. The segment covering 1508–1518 (EGSDIALEDSA) has biased composition (acidic residues).

In terms of assembly, interacts with RHOA, GNA13 and SLC1A6. Interacts with GNA12, PLXNB1 and PLXNB2. Interacts (via DH domain) with GCSAM (via C-terminus). Found in a complex with ARHGEF11 and ARHGEF12; binding to ARHGEF11 and ARHGEF12 enhances CDC42 GEF activity of PLEKHG4B, and PLEKHG4B, in turn, inhibits ARHGEF11- and ARHGEF12-mediated RHOA activation. Phosphorylated by MAP kinase p38 (MAPK11, MAPK12, MAPK13 and/or MAPK14). In terms of processing, ubiquitinated by the BCR(KLHL20) E3 ubiquitin ligase complex when previously phosphorylated by MAP kinase p38 (MAPK11, MAPK12, MAPK13 and/or MAPK14), leading to its degradation, thereby restricting RhoA activity and facilitating growth cone spreading and neurite outgrowth.

The protein resides in the cytoplasm. Its subcellular location is the membrane. Functionally, may play a role in the regulation of RhoA GTPase by guanine nucleotide-binding alpha-12 (GNA12) and alpha-13 (GNA13). Acts as guanine nucleotide exchange factor (GEF) for RhoA GTPase and may act as GTPase-activating protein (GAP) for GNA12 and GNA13. Involved in neurotrophin-induced neurite outgrowth. The polypeptide is Rho guanine nucleotide exchange factor 11 (Arhgef11) (Rattus norvegicus (Rat)).